The chain runs to 167 residues: Zymogen granule membrane protein 16 (167 aa).

Positions Met-1–Ala-16 are cleaved as a signal peptide. A Jacalin-type lectin domain is found at Ser-24–Thr-159.

It belongs to the jacalin lectin family. Expressed in pancreas, colon, duodenum, and much less in stomach.

It is found in the secreted. The protein resides in the extracellular space. The protein localises to the extracellular matrix. Its subcellular location is the zymogen granule lumen. It localises to the golgi apparatus lumen. Functionally, may play a role in protein trafficking. May act as a linker molecule between the submembranous matrix on the luminal side of zymogen granule membrane (ZGM) and aggregated secretory proteins during granule formation in the TGN. In Rattus norvegicus (Rat), this protein is Zymogen granule membrane protein 16 (Zg16).